Reading from the N-terminus, the 309-residue chain is Elongation factor Ts (309 aa).

The tract at residues 82-85 (TDFV) is involved in Mg(2+) ion dislocation from EF-Tu.

This sequence belongs to the EF-Ts family.

It localises to the cytoplasm. In terms of biological role, associates with the EF-Tu.GDP complex and induces the exchange of GDP to GTP. It remains bound to the aminoacyl-tRNA.EF-Tu.GTP complex up to the GTP hydrolysis stage on the ribosome. This Rickettsia felis (strain ATCC VR-1525 / URRWXCal2) (Rickettsia azadi) protein is Elongation factor Ts.